The following is a 286-amino-acid chain: NAD kinase (286 aa).

Aspartate 74 (proton acceptor) is an active-site residue. Residues 74-75, 148-149, aspartate 178, alanine 186, 189-194, and glutamine 244 contribute to the NAD(+) site; these read DG, ND, and TAYNLS.

The protein belongs to the NAD kinase family. Requires a divalent metal cation as cofactor.

The protein resides in the cytoplasm. The catalysed reaction is NAD(+) + ATP = ADP + NADP(+) + H(+). Involved in the regulation of the intracellular balance of NAD and NADP, and is a key enzyme in the biosynthesis of NADP. Catalyzes specifically the phosphorylation on 2'-hydroxyl of the adenosine moiety of NAD to yield NADP. The protein is NAD kinase of Campylobacter jejuni subsp. jejuni serotype O:6 (strain 81116 / NCTC 11828).